Reading from the N-terminus, the 212-residue chain is Interleukin-6 (212 aa).

The first 27 residues, 1–27 (MNSVSTSAFGPVAFSLGLLLVLPAAFP), serve as a signal peptide directing secretion. Cysteine 72 and cysteine 78 are joined by a disulfide. N-linked (GlcNAc...) asparagine glycosylation occurs at asparagine 73. A Phosphoserine modification is found at serine 81. Cysteine 101 and cysteine 111 are disulfide-bonded. An N-linked (GlcNAc...) asparagine glycan is attached at asparagine 172.

Belongs to the IL-6 superfamily. In terms of assembly, component of a hexamer of two molecules each of IL6, IL6R and IL6ST; first binds to IL6R to associate with the signaling subunit IL6ST. Interacts with IL6R (via the N-terminal ectodomain); this interaction may be affected by IL6R-binding with SORL1, hence decreasing IL6 cis signaling. Interacts with SORL1 (via the N-terminal ectodomain); this interaction leads to IL6 internalization and lysosomal degradation. May form a trimeric complex with the soluble SORL1 ectodomain and soluble IL6R receptor; this interaction might stabilize circulating IL6, hence promoting IL6 trans signaling.

It is found in the secreted. Its function is as follows. Cytokine with a wide variety of biological functions in immunity, tissue regeneration, and metabolism. Binds to IL6R, then the complex associates to the signaling subunit IL6ST/gp130 to trigger the intracellular IL6-signaling pathway. The interaction with the membrane-bound IL6R and IL6ST stimulates 'classic signaling', whereas the binding of IL6 and soluble IL6R to IL6ST stimulates 'trans-signaling'. Alternatively, 'cluster signaling' occurs when membrane-bound IL6:IL6R complexes on transmitter cells activate IL6ST receptors on neighboring receiver cells. IL6 is a potent inducer of the acute phase response. Rapid production of IL6 contributes to host defense during infection and tissue injury, but excessive IL6 synthesis is involved in disease pathology. In the innate immune response, is synthesized by myeloid cells, such as macrophages and dendritic cells, upon recognition of pathogens through toll-like receptors (TLRs) at the site of infection or tissue injury. In the adaptive immune response, is required for the differentiation of B cells into immunoglobulin-secreting cells. Plays a major role in the differentiation of CD4(+) T cell subsets. Essential factor for the development of T follicular helper (Tfh) cells that are required for the induction of germinal-center formation. Required to drive naive CD4(+) T cells to the Th17 lineage. Also required for proliferation of myeloma cells and the survival of plasmablast cells. In terms of biological role, acts as an essential factor in bone homeostasis and on vessels directly or indirectly by induction of VEGF, resulting in increased angiogenesis activity and vascular permeability. Induces, through 'trans-signaling' and synergistically with IL1B and TNF, the production of VEGF. Involved in metabolic controls, is discharged into the bloodstream after muscle contraction increasing lipolysis and improving insulin resistance. 'Trans-signaling' in central nervous system also regulates energy and glucose homeostasis. Mediates, through GLP-1, crosstalk between insulin-sensitive tissues, intestinal L cells and pancreatic islets to adapt to changes in insulin demand. Also acts as a myokine. Plays a protective role during liver injury, being required for maintenance of tissue regeneration. Also has a pivotal role in iron metabolism by regulating HAMP/hepcidin expression upon inflammation or bacterial infection. Through activation of IL6ST-YAP-NOTCH pathway, induces inflammation-induced epithelial regeneration. The protein is Interleukin-6 (IL6) of Macaca thibetana (Pere David's macaque).